The chain runs to 324 residues: Methionyl-tRNA formyltransferase (324 aa).

Residue 114–117 coordinates (6S)-5,6,7,8-tetrahydrofolate; the sequence is SLLP.

Belongs to the Fmt family.

It catalyses the reaction L-methionyl-tRNA(fMet) + (6R)-10-formyltetrahydrofolate = N-formyl-L-methionyl-tRNA(fMet) + (6S)-5,6,7,8-tetrahydrofolate + H(+). In terms of biological role, attaches a formyl group to the free amino group of methionyl-tRNA(fMet). The formyl group appears to play a dual role in the initiator identity of N-formylmethionyl-tRNA by promoting its recognition by IF2 and preventing the misappropriation of this tRNA by the elongation apparatus. The polypeptide is Methionyl-tRNA formyltransferase (Parabacteroides distasonis (strain ATCC 8503 / DSM 20701 / CIP 104284 / JCM 5825 / NCTC 11152)).